The chain runs to 351 residues: DNA polymerase IV (351 aa).

The region spanning 4–185 (IIHVDMDCFF…LPLAKIPGVG (182 aa)) is the UmuC domain. Mg(2+)-binding residues include Asp-8 and Asp-103. The active site involves Glu-104.

It belongs to the DNA polymerase type-Y family. As to quaternary structure, monomer. Requires Mg(2+) as cofactor.

It is found in the cytoplasm. The catalysed reaction is DNA(n) + a 2'-deoxyribonucleoside 5'-triphosphate = DNA(n+1) + diphosphate. Its function is as follows. Poorly processive, error-prone DNA polymerase involved in untargeted mutagenesis. Copies undamaged DNA at stalled replication forks, which arise in vivo from mismatched or misaligned primer ends. These misaligned primers can be extended by PolIV. Exhibits no 3'-5' exonuclease (proofreading) activity. May be involved in translesional synthesis, in conjunction with the beta clamp from PolIII. In Salmonella choleraesuis (strain SC-B67), this protein is DNA polymerase IV.